Here is a 608-residue protein sequence, read N- to C-terminus: Granule-bound starch synthase 1, chloroplastic/amyloplastic (608 aa).

Residues 1 to 76 (MATITASHFV…EGGMAAGTIV (76 aa)) constitute a chloroplast transit peptide. Lys96 serves as a coordination point for ADP-alpha-D-glucose.

This sequence belongs to the glycosyltransferase 1 family. Bacterial/plant glycogen synthase subfamily.

Its subcellular location is the plastid. The protein resides in the chloroplast. The protein localises to the amyloplast. It carries out the reaction an NDP-alpha-D-glucose + [(1-&gt;4)-alpha-D-glucosyl](n) = [(1-&gt;4)-alpha-D-glucosyl](n+1) + a ribonucleoside 5'-diphosphate + H(+). It functions in the pathway glycan biosynthesis; starch biosynthesis. Functionally, required for the synthesis of amylose. The polypeptide is Granule-bound starch synthase 1, chloroplastic/amyloplastic (WAXY) (Ipomoea batatas (Sweet potato)).